The sequence spans 419 residues: 3-isopropylmalate dehydratase large subunit (419 aa).

Cys-300, Cys-360, and Cys-363 together coordinate [4Fe-4S] cluster.

It belongs to the aconitase/IPM isomerase family. LeuC type 2 subfamily. Heterodimer of LeuC and LeuD. Requires [4Fe-4S] cluster as cofactor.

It catalyses the reaction (2R,3S)-3-isopropylmalate = (2S)-2-isopropylmalate. Its pathway is amino-acid biosynthesis; L-leucine biosynthesis; L-leucine from 3-methyl-2-oxobutanoate: step 2/4. Catalyzes the isomerization between 2-isopropylmalate and 3-isopropylmalate, via the formation of 2-isopropylmaleate. The sequence is that of 3-isopropylmalate dehydratase large subunit from Clostridium botulinum (strain Alaska E43 / Type E3).